The chain runs to 700 residues: Elongation factor G (700 aa).

A tr-type G domain is found at 8–290 (DKYRNIGISA…AVVELLPSPL (283 aa)). Residues 17-24 (AHIDAGKT), 88-92 (DTPGH), and 142-145 (NKMD) each bind GTP.

It belongs to the TRAFAC class translation factor GTPase superfamily. Classic translation factor GTPase family. EF-G/EF-2 subfamily.

The protein resides in the cytoplasm. Catalyzes the GTP-dependent ribosomal translocation step during translation elongation. During this step, the ribosome changes from the pre-translocational (PRE) to the post-translocational (POST) state as the newly formed A-site-bound peptidyl-tRNA and P-site-bound deacylated tRNA move to the P and E sites, respectively. Catalyzes the coordinated movement of the two tRNA molecules, the mRNA and conformational changes in the ribosome. This Polynucleobacter necessarius subsp. necessarius (strain STIR1) protein is Elongation factor G.